We begin with the raw amino-acid sequence, 252 residues long: 29 kDa protein (252 aa).

The tract at residues 222-252 is disordered; it reads YDGPYRPATTRPKSLLSSEDVKRASNKKNSS.

In Beta vulgaris (Sugar beet), this protein is 29 kDa protein.